The chain runs to 186 residues: Low amplitude and bright protein LabA (186 aa).

In terms of biological role, functions in an output pathway of the circadian clock. One of three clock output pathways. Involved in negative feedback regulation of KaiC; deletion leads to overexpression of KaiC protein and decreases the amplitude of the circadian response. Overexpression reduces the expression of circadian genes. In Synechococcus elongatus (strain ATCC 33912 / PCC 7942 / FACHB-805) (Anacystis nidulans R2), this protein is Low amplitude and bright protein LabA.